A 995-amino-acid polypeptide reads, in one-letter code: Pheromone-regulated membrane protein 10 (995 aa).

Disordered stretches follow at residues 1–217 (MSSH…GEKH), 253–299 (GRVL…AVEM), 326–407 (DQSF…YIAP), and 425–508 (NPQD…NPDQ). Residues 74–88 (SNSSTTNNSTESSGS) show a composition bias toward low complexity. Over residues 110–121 (VKGESGDAHEGS) the composition is skewed to basic and acidic residues. The span at 157-166 (SRGSVGSSSS) shows a compositional bias: low complexity. Residues 170-187 (KGSDDVNEKETNLDHDYD) show a composition bias toward basic and acidic residues. Over residues 259 to 269 (GSGGGGGGGLI) the composition is skewed to gly residues. A compositionally biased stretch (acidic residues) spans 283–296 (EEKEVGGGGEDDGA). Positions 326–347 (DQSFTYDEPNQSAGSSRNSTAP) are enriched in polar residues. Composition is skewed to basic and acidic residues over residues 359–371 (DDHK…DQGK) and 385–396 (GNDDPEDQHLLL). A compositionally biased stretch (acidic residues) spans 495–506 (EADDEDEDEENP). Transmembrane regions (helical) follow at residues 678–698 (VFLY…GGWL), 700–720 (IPVT…VSSM), 726–746 (SVFE…IGSI), 752–772 (FCFS…YIIL), 794–814 (IIYS…FGWV), 833–850 (KYRI…GLIN), 858–878 (PVMM…GKHF), 881–901 (VPEF…NVYS), 906–926 (GMAV…GIAS), and 965–985 (VEVS…VYPF).

The protein belongs to the ThrE exporter (TC 2.A.79) family.

Its subcellular location is the membrane. The sequence is that of Pheromone-regulated membrane protein 10 from Pichia sorbitophila (strain ATCC MYA-4447 / BCRC 22081 / CBS 7064 / NBRC 10061 / NRRL Y-12695) (Hybrid yeast).